Consider the following 415-residue polypeptide: Acrosin (415 aa).

Positions 1–16 are cleaved as a signal peptide; the sequence is MLPTAVLLVLAVSVAA. N-linked (GlcNAc...) asparagine glycosylation occurs at asparagine 19. Disulfide bonds link cysteine 22–cysteine 152, cysteine 26–cysteine 160, cysteine 71–cysteine 87, cysteine 175–cysteine 244, cysteine 207–cysteine 223, and cysteine 234–cysteine 264. One can recognise a Peptidase S1 domain in the interval 40 to 288; that stretch reads VVGGMSAEPG…YLNWIASKIG (249 aa). Residues histidine 86 and aspartate 140 each act as charge relay system in the active site. An N-linked (GlcNAc...) asparagine glycan is attached at asparagine 208. Serine 238 acts as the Charge relay system in catalysis. 2 disordered regions span residues 296–376 and 395–415; these read QLGT…PPQA and FSSG…LPAS. Pro residues-rich tracts occupy residues 300–312 and 328–367; these read PPRP…PVRP and PPGP…PPPQ. Positions 339–415 are cleaved as a propeptide — pro-rich; that stretch reads PRPPAPPPAP…TTDLQELPAS (77 aa). Positions 395–409 are enriched in polar residues; it reads FSSGRSYYETETTDL.

The protein belongs to the peptidase S1 family. In terms of assembly, heavy chain (catalytic) and a light chain linked by two disulfide bonds. Forms a heterodimer with SERPINA5.

The catalysed reaction is Preferential cleavage: Arg-|-Xaa, Lys-|-Xaa.. Inhibited by SERPINA5. Its function is as follows. Acrosin is the major protease of mammalian spermatozoa. It is a serine protease of trypsin-like cleavage specificity, it is synthesized in a zymogen form, proacrosin and stored in the acrosome. The chain is Acrosin (ACR) from Sus scrofa (Pig).